The following is a 329-amino-acid chain: 2-oxoglutarate-dependent dioxygenase mpl2 (329 aa).

The Fe2OG dioxygenase domain maps to 183–288; that stretch reads PACPLRLLHY…RYSVVFFFDG (106 aa). Residues His-211, Asp-213, and His-269 each contribute to the Fe cation site. Arg-279 serves as a coordination point for 2-oxoglutarate.

This sequence belongs to the iron/ascorbate-dependent oxidoreductase family. Fe(2+) is required as a cofactor.

The protein operates within mycotoxin biosynthesis. 2-oxoglutarate-dependent dioxygenase; part of the gene cluster that mediates the biosynthesis of the mycotoxin citrinin, a hepato-nephrotoxic compound to humans due to inhibition of respiration complex III. The pathway begins with the synthesis of a keto-aldehyde intermediate by the citrinin PKS (pksCT) from successive condensations of 4 malonyl-CoA units, presumably with a simple acetyl-CoA starter unit. Release of the keto-aldehyde intermediate is consistent with the presence of the C-terminal reductive release domain. Mp11 collaborates with pksCT by catalyzing the hydrolysis of ACP-bound acyl intermediates to free the ACP from stalled intermediates. Mpl2 then catalyzes the oxidation of the C-12 methyl of the ketone intermediate to an alcohol intermediate which is further oxidized by the oxidoreductase mpl7 to produce a bisaldehyde intermediate. The fourth catalytic step is catalyzed by the mpl4 aldehyde dehydrogenase. The final transformation is the reduction of C-3 by mpl6 to provide the chemically stable citrinin nucleus. This Monascus purpureus (Red mold) protein is 2-oxoglutarate-dependent dioxygenase mpl2.